The sequence spans 240 residues: MATLFIADLHLCVEEPAITAGFLRFLAGEARKADALYILGDLFEAWIGDDDPNPLHHQMAAAIKAVSDSGVPCYFIHGNRDFLLGKRFARESGMTLLPEEKVLELYGRRVLIMHGDTLCTDDAGYQAFRAKVHKPWLQTLFLALPLFVRKRIAARMRANSKEANSSKSLAIMDVNQNAVVNAMEKHQVQWLIHGHTHRPAVHELIANQQPAFRVVLGAWHTEGSMVKVTADDVELIHFPF.

Mn(2+) contacts are provided by Asp-8, His-10, Asp-41, Asn-79, and His-114. Residue 79-80 (NR) participates in substrate binding. 5 residues coordinate substrate: Asp-122, Ser-160, Asn-164, Lys-167, and His-195. Mn(2+) contacts are provided by His-195 and His-197.

It belongs to the LpxH family. The cofactor is Mn(2+).

The protein localises to the cell inner membrane. The catalysed reaction is UDP-2-N,3-O-bis[(3R)-3-hydroxytetradecanoyl]-alpha-D-glucosamine + H2O = 2-N,3-O-bis[(3R)-3-hydroxytetradecanoyl]-alpha-D-glucosaminyl 1-phosphate + UMP + 2 H(+). Its pathway is glycolipid biosynthesis; lipid IV(A) biosynthesis; lipid IV(A) from (3R)-3-hydroxytetradecanoyl-[acyl-carrier-protein] and UDP-N-acetyl-alpha-D-glucosamine: step 4/6. In terms of biological role, hydrolyzes the pyrophosphate bond of UDP-2,3-diacylglucosamine to yield 2,3-diacylglucosamine 1-phosphate (lipid X) and UMP by catalyzing the attack of water at the alpha-P atom. Involved in the biosynthesis of lipid A, a phosphorylated glycolipid that anchors the lipopolysaccharide to the outer membrane of the cell. This is UDP-2,3-diacylglucosamine hydrolase from Escherichia coli O127:H6 (strain E2348/69 / EPEC).